The following is a 399-amino-acid chain: Cell division protein FtsZ (399 aa).

GTP-binding positions include 30-34 (GGGSN), 117-119 (GTG), Glu148, Lys152, and Asp196. The tract at residues 349–368 (TLMSGNQNAPSGSYEQQDSS) is disordered. The span at 351-368 (MSGNQNAPSGSYEQQDSS) shows a compositional bias: polar residues.

Belongs to the FtsZ family. Homodimer. Polymerizes to form a dynamic ring structure in a strictly GTP-dependent manner. Interacts directly with several other division proteins.

It localises to the cytoplasm. Its function is as follows. Essential cell division protein that forms a contractile ring structure (Z ring) at the future cell division site. The regulation of the ring assembly controls the timing and the location of cell division. One of the functions of the FtsZ ring is to recruit other cell division proteins to the septum to produce a new cell wall between the dividing cells. Binds GTP and shows GTPase activity. This Borreliella burgdorferi (strain ATCC 35210 / DSM 4680 / CIP 102532 / B31) (Borrelia burgdorferi) protein is Cell division protein FtsZ.